Consider the following 250-residue polypeptide: Transcriptional activator protein EchR (250 aa).

Positions 173-238 (KSQEPNIFSQ…HAIRLGVEMN (66 aa)) constitute an HTH luxR-type domain. The H-T-H motif DNA-binding region spans 197 to 216 (YQEIALILGITTSTVKFHIG).

Belongs to the autoinducer-regulated transcriptional regulatory protein family.

In terms of biological role, functions as a potential ohlL-responsive transcriptional regulator. The polypeptide is Transcriptional activator protein EchR (echR) (Dickeya chrysanthemi (Pectobacterium chrysanthemi)).